The primary structure comprises 382 residues: Lipid-A-disaccharide synthase (382 aa).

The protein belongs to the LpxB family.

It carries out the reaction 2-N,3-O-bis[(3R)-3-hydroxytetradecanoyl]-alpha-D-glucosaminyl 1-phosphate + UDP-2-N,3-O-bis[(3R)-3-hydroxytetradecanoyl]-alpha-D-glucosamine = lipid A disaccharide (E. coli) + UDP + H(+). It catalyses the reaction a lipid X + a UDP-2-N,3-O-bis[(3R)-3-hydroxyacyl]-alpha-D-glucosamine = a lipid A disaccharide + UDP + H(+). The protein operates within glycolipid biosynthesis; lipid IV(A) biosynthesis; lipid IV(A) from (3R)-3-hydroxytetradecanoyl-[acyl-carrier-protein] and UDP-N-acetyl-alpha-D-glucosamine: step 5/6. In terms of biological role, condensation of UDP-2,3-diacylglucosamine and 2,3-diacylglucosamine-1-phosphate to form lipid A disaccharide, a precursor of lipid A, a phosphorylated glycolipid that anchors the lipopolysaccharide to the outer membrane of the cell. The chain is Lipid-A-disaccharide synthase from Escherichia coli O127:H6 (strain E2348/69 / EPEC).